We begin with the raw amino-acid sequence, 553 residues long: Protein TIC 55, chloroplastic (553 aa).

The N-terminal 60 residues, M1–A60, are a transit peptide targeting the chloroplast. Residues A61–Q492 are Stromal-facing. Positions W103–V208 constitute a Rieske domain. Positions 144, 146, 163, and 166 each coordinate [2Fe-2S] cluster. Fe cation-binding residues include H257 and H262. The helical transmembrane segment at I493–S513 threads the bilayer. Over G514–K518 the chain is Chloroplast intermembrane. A helical membrane pass occupies residues V519 to I539. The Stromal segment spans residues A540–L553.

In terms of assembly, part of the Tic complex. Interacts with TIC62 and TIC110. Requires [2Fe-2S] cluster as cofactor.

It is found in the plastid. It localises to the chloroplast inner membrane. Involved in protein precursor import into chloroplasts. Part of the redox regulon consisting of TIC32, TIC 55 and TIC62. This chain is Protein TIC 55, chloroplastic (TIC55), found in Pisum sativum (Garden pea).